Here is a 376-residue protein sequence, read N- to C-terminus: Delta(12) fatty acid desaturase fat-2 (376 aa).

4 consecutive transmembrane segments (helical) span residues 45–65, 69–89, 203–223, and 228–248; these read ISYL…VPYI, LGWI…SALF, VKCA…FVLC, and YTFV…LVII.

This sequence belongs to the fatty acid desaturase type 1 family.

The protein localises to the membrane. The enzyme catalyses (9Z)-octadecenoyl-CoA + 2 Fe(II)-[cytochrome b5] + O2 + 2 H(+) = (9Z,12Z)-octadecadienoyl-CoA + 2 Fe(III)-[cytochrome b5] + 2 H2O. It catalyses the reaction (9Z)-hexadecenoyl-CoA + 2 Fe(II)-[cytochrome b5] + O2 + 2 H(+) = (9Z,12Z)-hexadecadienoyl-CoA + 2 Fe(III)-[cytochrome b5] + 2 H2O. The catalysed reaction is (9Z,12Z)-octadecadienoyl-CoA + 2 Fe(II)-[cytochrome b5] + O2 + 2 H(+) = (9Z,12Z,15Z)-octadecatrienoyl-CoA + 2 Fe(III)-[cytochrome b5] + 2 H2O. It carries out the reaction (9Z)-heptadecenoyl-CoA + 2 Fe(II)-[cytochrome b5] + O2 + 2 H(+) = (9Z,12Z)-heptadecadienoyl-CoA + 2 Fe(III)-[cytochrome b5] + 2 H2O. The enzyme catalyses (9Z)-pentadecenoyl-CoA + 2 Fe(II)-[cytochrome b5] + O2 + 2 H(+) = (9Z,12Z)-pentadecadienoyl-CoA + 2 Fe(III)-[cytochrome b5] + 2 H2O. It catalyses the reaction (6Z,9Z,12Z)-octadecatrienoyl-CoA + 2 Fe(II)-[cytochrome b5] + O2 + 2 H(+) = (6Z,9Z,12Z,15Z)-octadecatetraenoyl-CoA + 2 Fe(III)-[cytochrome b5] + 2 H2O. The catalysed reaction is (9Z)-tetradecenoyl-CoA + 2 Fe(II)-[cytochrome b5] + O2 + 2 H(+) = (9Z,12Z)-tetradecadienoyl-CoA + 2 Fe(III)-[cytochrome b5] + 2 H2O. Its pathway is lipid metabolism; polyunsaturated fatty acid biosynthesis. In terms of biological role, can function as a Delta(12)/Delta(15) bifunctional desaturase and behaves as a nu +3' desaturase. Introduces a double bond in the fatty acid chain three carbons away from an existing double bond to biosynthesize polyunsaturated fatty acids (PUFAs) endogenously (PUFAs are essential for membrane structure and many cellular and physiological processes). Acts on a number of substrates like oleoyl-CoA ((9Z)-octadecenoyl-CoA, 18:1n-9), palmitoleoyl-CoA ((9Z)-hexadecenoyl-CoA, 16:1n-7), and gamma-linolenoyl-CoA ((6Z,9Z,12Z)-octadecatrienoyl-CoA, 18:3n-6), to generate linoleoyl-CoA ((9Z,12Z)-octadecadienoyl-CoA, 18:2n-6), (9Z,12Z)-hexadecadienoyl-CoA (16:2n-4) and (6Z,9Z,12Z,15Z)-octadecatetraenoyl-CoA (18:4n-3) respectively. Unlike plants, Caenorhabditis elegans desaturases seem to use fatty acyl-CoAs as substrates. This chain is Delta(12) fatty acid desaturase fat-2 (fat-2), found in Caenorhabditis elegans.